A 666-amino-acid chain; its full sequence is Calmodulin-binding receptor kinase CaMRLK (666 aa).

Residues 1–17 form the signal peptide; it reads MFLKLFLLLSLVSFSHS. Over 18–297 the chain is Extracellular; that stretch reads DSSSTVSCPN…KTHRTNHTPL (280 aa). Residues asparagine 27, asparagine 45, asparagine 52, asparagine 68, asparagine 78, asparagine 89, asparagine 110, asparagine 126, asparagine 137, asparagine 148, asparagine 154, asparagine 189, asparagine 212, asparagine 229, and asparagine 261 are each glycosylated (N-linked (GlcNAc...) asparagine). 7 LRR repeats span residues 79 to 103, 105 to 127, 130 to 152, 153 to 177, 178 to 197, 198 to 224, and 226 to 246; these read LTRL…LWSM, GLVS…PVNG, LSAV…FTGF, TNLT…SLSG, LRHL…PISG, LKSL…NLNH, and QFLN…KYRK. The chain crosses the membrane as a helical span at residues 298-318; sequence VIGLSSSLGALIIVIFAAAII. The calmodulin binding stretch occupies residues 319 to 337; it reads LIRRRMKSARTKSRWAISN. Over 319–666 the chain is Cytoplasmic; sequence LIRRRMKSAR…LLKDIRTVSR (348 aa). The region spanning 395–661 is the Protein kinase domain; the sequence is FGTESVISDG…QQVLGLLKDI (267 aa). Residues 401-409 and lysine 423 each bind ATP; that span reads ISDGTCGPL.

The protein belongs to the protein kinase superfamily. Ser/Thr protein kinase family. Binds calmodulin (CaM) in a calcium-dependent manner. Interacts with CAM1, but not with CAM8. Requires Mn(2+) as cofactor. Mg(2+) serves as cofactor. Post-translationally, calmodulin (CaM)-independent autophosphorylation. In terms of tissue distribution, expressed in reproductive and vegetative tissues, with higher levels in seedlings and flowers, but not in leaves.

Its subcellular location is the cell membrane. The enzyme catalyses L-seryl-[protein] + ATP = O-phospho-L-seryl-[protein] + ADP + H(+). The catalysed reaction is L-threonyl-[protein] + ATP = O-phospho-L-threonyl-[protein] + ADP + H(+). Its activity is regulated as follows. Not stimulated by calmodulin (CaM). In terms of biological role, can phosphorylate the myelin basic protein in vitro. Required for endosperm development in embryos. Maybe involved in auxin and osmotic stress responses. This chain is Calmodulin-binding receptor kinase CaMRLK, found in Arabidopsis thaliana (Mouse-ear cress).